A 358-amino-acid chain; its full sequence is Septin-12 (358 aa).

The segment at 1 to 25 (MDPLRRSPSPCLSSQPSSPSTPPCE) is disordered. Low complexity predominate over residues 6 to 18 (RSPSPCLSSQPSS). The region spanning 46-317 (MGFEFNIMVV…ENYRVIRLNE (272 aa)) is the Septin-type G domain. The segment at 46–319 (MGFEFNIMVV…YRVIRLNESH (274 aa)) is interaction with SEPTIN7. A G1 motif region spans residues 56-63 (GQSGLGKS). GTP contacts are provided by residues 56–63 (GQSGLGKS), T89, G115, 195–203 (RADSLTMEE), G251, and R266. Residues 112–115 (DTPG) are G3 motif. A G4 motif region spans residues 194–197 (ARAD). Residues 258 to 358 (VNGRCVLGRK…GAHDDSDDEF (101 aa)) form a self-association (via N-terminus) to polymerize octameric septin 12-7-6-2/4-2/4-6-7-12 filaments region.

The protein belongs to the TRAFAC class TrmE-Era-EngA-EngB-Septin-like GTPase superfamily. Septin GTPase family. As to quaternary structure, septins polymerize into heterooligomeric protein complexes that form filaments, and can associate with cellular membranes, actin filaments and microtubules. GTPase activity is required for filament formation. Interacts with SEPTIN6 and SEPTIN11. Self-associates. Component of a septin core octameric complex consisting of SEPTIN12, SEPTIN7, SEPTIN6 and SEPTIN2 or SEPTIN4 in the order 12-7-6-2-2-6-7-12 or 12-7-6-4-4-6-7-12 and located in the sperm annulus; the octamer polymerizes into filaments via the SEPTIN12 N- and C-termini; the SEPTIN12:SEPTIN7 association is mediated by the respective GTP-binding domains. Interacts with SPAG4 and LMNB1. Associates with alpha- and beta-tubulins. As to expression, widely expressed. Expressed in lymph node.

It is found in the cytoplasm. Its subcellular location is the cytoskeleton. The protein resides in the spindle. The protein localises to the nucleus. It localises to the cell projection. It is found in the cilium. Its subcellular location is the flagellum. Filament-forming cytoskeletal GTPase. Involved in spermatogenesis. Involved in the morphogenesis of sperm heads and the elongation of sperm tails probably implicating the association with alpha- and beta-tubulins. Forms a filamentous structure with SEPTIN7, SEPTIN6, SEPTIN2 and probably SEPTIN4 at the sperm annulus which is required for the structural integrity and motility of the sperm tail during postmeiotic differentiation. May play a role in cytokinesis (Potential). The protein is Septin-12 of Homo sapiens (Human).